We begin with the raw amino-acid sequence, 985 residues long: MKTLRARFKKTEGQDWGKSDQRLLQAVENNDVARVASLIAHKGLVPTKLDPEGKSAFHLAAMRGAAGCLEVMLAQGADVMSTDGAGYNALHLAAKYGHPECLKQLLEASCVVDIEDSSGWTALHHAAAGGCLSCSKLLCSFKAHMNPRDRSGATPLIIAAQMCHTDLCRLLLQQGAATNDQDLQGRTALMLACEGGSPETVEVLLQGGAQLSITDALGQDATHYGALTGDKLILQLLHESARRSSPPSASLEEDSGEASSQNSVSSHEKQGAPKKRKAPQPPASTPVPDDRDAYEEIVRLRQERGRLLQKIRGLEQHKERRRKEPLEAEASSVHSLERQVQELQQMLAEKQEEKESLGREVESLQSRLSLLENERENTSYDVATLQDEEGEMPDFPGADALMPKNQSPSAEEIVASLQEQVAQLTRQNQELLEKVQILEEFEKDEAQMAEESQAEVVPLVLYESLRAELEQLRRQYTEAMHSQQQQQEGEPPRAQEGEETAYQEIKDKGITIQNGPSVPDLNGTTYAETKANGMELQAGGSKGVWNTEAGVSEAAPIEPEAAGSEATGKDRLAAKEMDTSATMAEALNVKALGDNAESEPVAAEDTGGKENPGMKADEVDVLAQAGLTGTVIRNMEAIGVRDTGIQATGLEAKAVKTTGVQATVAEVIGVKVTGVQTTAIEAIGVKDTTQVATGAQADCWQATEADCTGAQDTAMEPTGAQATVTETTEAETSGTEDPCAAILHPGAAAAALQAELETRIRGLEEALRRREREAAAELEAARGRFAEAEEAARGRSRELEALRELLATATATGERARTEAAELRQALAASEARVAELSSTVDAAREELERMRGASVPADEHEHALSALRDHVTRLQAQLADLARRHEKTSAEVFQITDLSKEVFTLKEALKVQQSTPASSKEEEALRGQVTALQQQIQEEAREHGAVVALYRTHLLYAIQGQMDEDVQCILSQILQMQRLQAQGR.

ANK repeat units lie at residues 52 to 81, 85 to 114, 118 to 147, 151 to 180, and 184 to 213; these read EGKS…DVMS, AGYN…VVDI, SGWT…HMNP, SGAT…ATND, and QGRT…QLSI. Disordered stretches follow at residues 243–293, 311–360, 386–412, 476–503, and 594–614; these read RSSP…DRDA, IRGL…LGRE, QDEE…SAEE, YTEA…TAYQ, and DNAE…NPGM. Residues 291-488 adopt a coiled-coil conformation; sequence RDAYEEIVRL…AMHSQQQQQE (198 aa). Composition is skewed to basic and acidic residues over residues 311–326 and 349–360; these read IRGL…KEPL and EKQEEKESLGRE.

Homodimer. Interacts (via C-terminal domain) with TRIOBP (via C-terminal domain) isoform 4; recruits TRIOBP isoform 4 to stereocilia rootlets. In terms of tissue distribution, expressed in vestibular hair bundles.

It localises to the cell membrane. The protein resides in the cell projection. The protein localises to the stereocilium. Its function is as follows. Component of the stereocilia rootlet in hair cells of inner ear. Bridges the apical plasma membrane with the lower rootlet and maintains normal distribution of TRIOBP, thereby reinforcing stereocilia insertion points and organizing rootlets for hearing with long-term resilience. This Mus musculus (Mouse) protein is Ankyrin repeat domain-containing protein 24 (Ankrd24).